A 140-amino-acid polypeptide reads, in one-letter code: Ribosome-binding factor A (140 aa).

The interval 121 to 140 is disordered; it reads KAAEHGREDEELDDTEQDDK. Residues 129-140 show a composition bias toward acidic residues; it reads DEELDDTEQDDK.

Belongs to the RbfA family. Monomer. Binds 30S ribosomal subunits, but not 50S ribosomal subunits or 70S ribosomes.

It localises to the cytoplasm. In terms of biological role, one of several proteins that assist in the late maturation steps of the functional core of the 30S ribosomal subunit. Associates with free 30S ribosomal subunits (but not with 30S subunits that are part of 70S ribosomes or polysomes). Required for efficient processing of 16S rRNA. May interact with the 5'-terminal helix region of 16S rRNA. In Shewanella loihica (strain ATCC BAA-1088 / PV-4), this protein is Ribosome-binding factor A.